The chain runs to 214 residues: tRNA (guanine-N(7)-)-methyltransferase (214 aa).

S-adenosyl-L-methionine is bound by residues E43, E68, D95, and D117. D117 is a catalytic residue. Substrate contacts are provided by residues K121, D153, and 190-193; that span reads TEYE.

It belongs to the class I-like SAM-binding methyltransferase superfamily. TrmB family.

It catalyses the reaction guanosine(46) in tRNA + S-adenosyl-L-methionine = N(7)-methylguanosine(46) in tRNA + S-adenosyl-L-homocysteine. The protein operates within tRNA modification; N(7)-methylguanine-tRNA biosynthesis. Catalyzes the formation of N(7)-methylguanine at position 46 (m7G46) in tRNA. The sequence is that of tRNA (guanine-N(7)-)-methyltransferase from Staphylococcus aureus (strain COL).